We begin with the raw amino-acid sequence, 94 residues long: Antitoxin HipB (94 aa).

Positions 23–77 constitute an HTH cro/C1-type domain; sequence MKLVRQQNGWTQSELAKKIGIKQATISNFENNPDNTSLTTFFKILQSLELSMTLC. The H-T-H motif DNA-binding region spans 34–53; sequence QSELAKKIGIKQATISNFEN.

As to quaternary structure, homodimer. Forms a HipA(2)HipB(2) heterotetramer which can interact with DNA. This complex also blocks the toxic activity of HipA.

In terms of biological role, antitoxin component of a type II type II toxin-antitoxin (TA) system. Neutralizes the toxic effect of cognate toxin HipA. Represses the hipBA operon promoter. This Escherichia coli O6:H1 (strain CFT073 / ATCC 700928 / UPEC) protein is Antitoxin HipB (hipB).